The chain runs to 507 residues: Mitochondrial antiviral-signaling protein (507 aa).

Topologically, residues methionine 1 to lysine 482 are cytoplasmic. Residues lysine 7 and lysine 10 each participate in a glycyl lysine isopeptide (Lys-Gly) (interchain with G-Cter in ubiquitin) cross-link. In terms of domain architecture, CARD spans lysine 10 to arginine 77. The segment at lysine 10 to arginine 77 is required for interaction with NLRX1. Cysteine 79 carries the S-palmitoyl cysteine lipid modification. Disordered regions lie at residues phenylalanine 123–serine 238, threonine 250–proline 326, and alanine 350–glycine 401. Positions proline 143 to threonine 147 are interaction with TRAF2. Residues serine 152, serine 157, serine 172, serine 178, serine 186, and serine 220 each carry the phosphoserine modification. Residues proline 153–glutamate 158 form an interaction with TRAF6 region. The residue at position 234 (arginine 234) is an Asymmetric dimethylarginine. Low complexity-rich tracts occupy residues threonine 250–glycine 266 and valine 281–serine 293. Residue serine 256 is modified to Phosphoserine. The span at asparagine 300 to alanine 325 shows a compositional bias: polar residues. Residue lysine 305 forms a Glycyl lysine isopeptide (Lys-Gly) (interchain with G-Cter in ubiquitin) linkage. Positions proline 340–glutamine 507 are interaction with DHX33. Positions arginine 359–leucine 368 are enriched in basic and acidic residues. Over residues valine 374 to leucine 391 the composition is skewed to polar residues. Serine 387 carries the phosphoserine modification. Residues leucine 419–serine 422 carry the pLxIS motif motif. Serine 422 carries the post-translational modification Phosphoserine; by TBK1. The tract at residues proline 423–cysteine 474 is disordered. An interaction with TRAF6 region spans residues proline 435–tyrosine 440. Residues tryptophan 483–tyrosine 500 traverse the membrane as a helical segment. Topologically, residues arginine 501–glutamine 507 are mitochondrial intermembrane.

Self-associates and polymerizes (via CARD domains) to form 400 nM long three-stranded helical filaments on mitochondria, filament nucleation requires interaction with RIGI whose CARD domains act as a template for filament assembly. Interacts with RIGI, IFIH1/MDA5, TRAF2, TRAF6 and C1QBP. May interact with FADD, RIPK1, CHUK and IKBKB. Interacts (when phosphorylated) with IRF3; following activation and phosphorylation on the pLxIS motif by TBK1, recruits IRF3. Interacts with NLRX1. Interaction with NLRX1 requires the CARD domain. Interacts with PSMA7. Interacts with TRAFD1. Interacts (via C-terminus) with PCBP2 in a complex containing MAVS/IPS1, PCBP2 and ITCH. Interacts with CYLD. Interacts with SRC. Interacts with DHX58/LGP2 and IKBKE. Interacts with STING1. Interacts with IFIT3 (via N-terminus). Interacts with TBK1 only in the presence of IFIT3. Interacts with TTLL12; the interaction prevents MAVS binding to TBK1 and IKBKE. Interacts with MUL1. Interacts with ANKRD17. Interacts with NDFIP1. Interacts with SMURF1; the interaction is mediated by NDFIP1 and leads to MAVS ubiquitination and degradation. Interacts with UBXN1; this interaction inhibits MAVS-mediated antiviral pathway. Interacts (via C-terminus) with GPATCH3; the interaction is markedly increased upon viral infection. Directly interacts (via CARD domain) with ATG5 and ATG12, either as ATG5 and ATG12 monomers or as ATG12-ATG5 conjugates. Interacts with DHX33 (via the helicase C-terminal domain). Interacts with DDX3X (via C-terminus); this interaction may occur rapidly, but transiently after viral infection. The interaction with DDX3X potentiates MAVS-mediated IFNB induction. Conversely inhibition of this interaction prevents MAVS-mediated IFNB induction. Transiently interacts with TRAF3 early during viral infection. Interacts with CLPB. Interacts with TRAF3IP3. Interacts with TOMM70; the interaction is enhanced by virus infection. Interacts with ZNFX1. Interacts with DHX15. Interacts with N4BP3; this interaction promotes the polyubiquitination of MAVS. Interacts with TAX1BP1; this interaction induces MAVS polyubiquitination. Interacts with NLRP3; promoting NLRP3 recruitment to mitochondria and activation of the NLRP3 inflammasome. Interacts with ECSIT; this interaction bridges RIGI to the MAVS complex at the mitochondrion. Interacts with UBL7; this interaction promotes MAVS 'Lys-27'-linked ubiquitination leading to type I interferon production. Interacts (via transmembrane domain) with SMIM30/MAVI1 (via transmembrane domain); the interaction disrupts MAVS interaction with RIGI and inhibits MAVS aggregation, resulting in the repression of type I interferon signaling and innate immune responses. Following activation, phosphorylated by TBK1 at Ser-422 in the pLxIS motif. The phosphorylated pLxIS motif constitutes an IRF3-binding motif, leading to recruitment of the transcription factor IRF3 to induce type-I interferons and other cytokines. Post-translationally, ubiquitinated. Undergoes 'Lys-48'-linked polyubiquitination catalyzed by ITCH; ITCH-dependent polyubiquitination is mediated by the interaction with PCBP2 and leads to MAVS/IPS1 proteasomal degradation. Ubiquitinated by RNF125, leading to its degradation by the proteasome. Undergoes 'Lys-48'-linked ubiquitination catalyzed by SMURF1. Undergoes 'Lys-48'-linked ubiquitination catalyzed by MARCHF5 at Lys-7, leading to proteasomal degradation. Ubiquitinated via 'Lys-63'-linked ubiquitination at Lys-10 by TRIM31, promoting MAVS polymerization and formation of three-stranded helical filaments on mitochondria. Undergoes 'Lys-63'-linked ubiquitination leading to enhanced interaction between MAVS and TRAF2. Undergoes 'Lys-27'-linked ubiquitination by UBE2N and TRIM21 leading to enhanced interaction between MAVS and TBK1. Deubiquitinated by USP10 leading to attenuation of RIGI-mediated MAVS aggregation and production of type I interferon. Undergoes 'Lys-48'-linked polyubiquitination catalyzed by RNF115 leading to its degradation. In terms of processing, proteolytically cleaved by apoptotic caspases during apoptosis, leading to its inactivation. Cleavage by CASP3 during virus-induced apoptosis inactivates it, preventing cytokine overproduction. Palmitoylated by ZHDDC4. Palmitoylation promotes MAVS stabilization and activation by inhibiting 'Lys-48'- but facilitating 'Lys-63'-linked ubiquitination.

It localises to the mitochondrion outer membrane. The protein resides in the mitochondrion. It is found in the peroxisome. Its function is as follows. Adapter required for innate immune defense against viruses. Acts downstream of DHX33, RIGI and IFIH1/MDA5, which detect intracellular dsRNA produced during viral replication, to coordinate pathways leading to the activation of NF-kappa-B, IRF3 and IRF7, and to the subsequent induction of antiviral cytokines such as IFN-beta and RANTES (CCL5). Peroxisomal and mitochondrial MAVS act sequentially to create an antiviral cellular state. Upon viral infection, peroxisomal MAVS induces the rapid interferon-independent expression of defense factors that provide short-term protection, whereas mitochondrial MAVS activates an interferon-dependent signaling pathway with delayed kinetics, which amplifies and stabilizes the antiviral response. May activate the same pathways following detection of extracellular dsRNA by TLR3. May protect cells from apoptosis. Involved in NLRP3 inflammasome activation by mediating NLRP3 recruitment to mitochondria. The protein is Mitochondrial antiviral-signaling protein (Mavs) of Rattus norvegicus (Rat).